The sequence spans 436 residues: 3-ketoacyl-CoA thiolase (436 aa).

Catalysis depends on cysteine 99, which acts as the Acyl-thioester intermediate. Catalysis depends on proton acceptor residues histidine 392 and cysteine 422.

The protein belongs to the thiolase-like superfamily. Thiolase family. In terms of assembly, heterotetramer of two alpha chains (FadJ) and two beta chains (FadI).

It localises to the cytoplasm. The catalysed reaction is an acyl-CoA + acetyl-CoA = a 3-oxoacyl-CoA + CoA. It functions in the pathway lipid metabolism; fatty acid beta-oxidation. Catalyzes the final step of fatty acid oxidation in which acetyl-CoA is released and the CoA ester of a fatty acid two carbons shorter is formed. This Yersinia pseudotuberculosis serotype O:1b (strain IP 31758) protein is 3-ketoacyl-CoA thiolase.